Here is a 551-residue protein sequence, read N- to C-terminus: MAEKRTVSPPAGTERRAKGWIQEAALRMLNNNLHPDVAERPDELIVYGGIGKAARNWECYEAIVDTLLRLENDETLLIQSGKPVAVFRTHPDAPRVLIANSNLVPAWATWDHFHELDKKGLIMYGQMTAGSWIYIGSQGIVQGTYETFAEVARQHFGGTLAGTITLTAGLGGMGGAQPLAVTMNGGVCLAIEVDPARIQRRIDTNYLDTMTDSLDAALEMAKQAKEEKKALSIGLVGNAAEVLPRLVEMGFVPDVLTDQTSAHDPLNGYIPAGLTLDEAAELRARDPKQYIARAKQSIAAHVRAMLAMQKQGAVTFDYGNNIRQVAKDEGVDDAFSFPGFVPAYIRPLFCEGKGPFRWVALSGDPEDIYKTDEVILREFSDNERLCHWIRMAQKRIKFQGLPARICWLGYGERAKFGKIINDMVAKGELKAPIVIGRDHLDSGSVASPNRETEGMKDGSDAIADWPILNALLNAVGGASWVSVHHGGGVGMGYSIHAGMVIVADGTKEAEKRLERVLTTDPGLGVVRHADAGYELAIRTAKEKGIDMPMLK.

NAD(+) contacts are provided by residues 48 to 49, Gln126, 172 to 174, Glu192, Arg197, 238 to 239, 259 to 263, 269 to 270, and Tyr318; these read GG, GMG, NA, QTSAH, and YI. Residue Cys406 is part of the active site. NAD(+) is bound at residue Gly488.

The protein belongs to the urocanase family. NAD(+) is required as a cofactor.

The protein localises to the cytoplasm. It carries out the reaction 4-imidazolone-5-propanoate = trans-urocanate + H2O. It participates in amino-acid degradation; L-histidine degradation into L-glutamate; N-formimidoyl-L-glutamate from L-histidine: step 2/3. Functionally, catalyzes the conversion of urocanate to 4-imidazolone-5-propionate. This is Urocanate hydratase from Geobacillus kaustophilus (strain HTA426).